The sequence spans 1591 residues: Rho guanine nucleotide exchange factor TIAM1 (1591 aa).

A disordered region spans residues 1 to 70 (MGNAESQNVD…TPSIPQSLAE (70 aa)). Glycine 2 carries the N-myristoyl glycine lipid modification. Basic and acidic residues predominate over residues 8–19 (NVDHEFYGEKHA). The span at 20–49 (SLGRKHTSRSLRLSHKTRRTRHASSGKAIH) shows a compositional bias: basic residues. Low complexity predominate over residues 53–67 (EVSTRSSSTPSIPQS). 3 positions are modified to phosphoserine: serine 231, serine 356, and serine 358. 2 disordered regions span residues 305–380 (QISL…DRAR) and 393–422 (MSTT…SPGQ). Positions 340–359 (TTDTDLLSRRSNATNSSYSP) are enriched in polar residues. The span at 367-376 (GSDSGSSSTG) shows a compositional bias: low complexity. The span at 412–422 (QSSGTLSSPGQ) shows a compositional bias: polar residues. Residues 434–549 (VRKAGALAVK…TAIHSACAAA (116 aa)) enclose the PH 1 domain. At serine 695 the chain carries Phosphoserine. The region spanning 765–832 (TPSWFCLPNN…QPEEDIYELL (68 aa)) is the RBD domain. At tyrosine 829 the chain carries Phosphotyrosine; by NTRK2. One can recognise a PDZ domain in the interval 845 to 908 (NIHIEKSDAA…NNRAAGTLNS (64 aa)). Positions 933–1034 (GVELLENPPH…TSPQLATTRQ (102 aa)) are disordered. Residues 958–975 (LTSNPGHSLSSEQGSSAE) show a composition bias toward polar residues. Residues 977-990 (APEEGEGPDLESSD) are compositionally biased toward acidic residues. The span at 1014–1028 (PSDSSPSPQDATSPQ) shows a compositional bias: low complexity. Positions 1040 to 1234 (KLRKVICELL…NKVASHINEM (195 aa)) constitute a DH domain. In terms of domain architecture, PH 2 spans 1261 to 1397 (DLSMGDLLLH…KSVHSILRDK (137 aa)). Tyrosine 1323 carries the phosphotyrosine modification. Residues lysine 1404 and lysine 1420 each participate in a glycyl lysine isopeptide (Lys-Gly) (interchain with G-Cter in ubiquitin) cross-link. Residues 1456-1481 (TIDSDAISASSPEKEPQQPAGGGDTD) form a disordered region. The residue at position 1519 (serine 1519) is a Phosphoserine.

The protein belongs to the TIAM family. As to quaternary structure, component of the Par polarity complex, composed of at least phosphorylated PRKCZ, PARD3 and TIAM1. Interacts with BAIAP2. Interacts (via PDZ domain) with CNTNAP4, SDC1 and SDC3 (via C-terminus). Interacts with CD44, PARD3 and MAPK8IP2. Interacts with EPHA8; regulates clathrin-mediated endocytosis of EPHA8. Interacts with NTRK2; mediates the activation of RAC1 by BDNF. Post-translationally, ubiquitinated. Undergoes 'Lys-48' ubiquitination at Lys-1404 and Lys-1420 by a CUL3(KBTBD6/7) E3 ubiquitin ligase complex composed of CUL3, RBX1, KBTBD6 and KBTBD7. 'Lys-48' ubiquitination at Lys-1404 and Lys-1420 triggers proteasomal degradation. Ubiquitination at Lys-1404 and Lys-1420 by CUL3(KBTBD6/7) also requires the membrane-associated protein GABARAP and may therefore be spatially restricted within the cell. In terms of tissue distribution, highly expressed in brain and testis and at low or moderate levels in almost all other normal tissues. Found in virtually all analyzed tumor cell lines including B- and T-lymphomas, neuroblastomas, melanomas and carcinomas.

It localises to the cell junction. The protein resides in the cell membrane. Functionally, guanyl-nucleotide exchange factor that activates RHO-like proteins and connects extracellular signals to cytoskeletal activities. Activates RAC1, CDC42, and to a lesser extent RHOA and their downstream signaling to regulate processes like cell adhesion and cell migration. The protein is Rho guanine nucleotide exchange factor TIAM1 of Mus musculus (Mouse).